The following is a 245-amino-acid chain: Type I iodothyronine deiodinase (245 aa).

Over 1–9 the chain is Extracellular; it reads LSIRVLLHK. Residues 10–30 traverse the membrane as a helical; Signal-anchor for type III membrane protein segment; it reads LLILLQVTLSVVVGKTMMILF. Topologically, residues 31-245 are cytoplasmic; sequence PDTTKRYILK…EIRAVLEKLK (215 aa). Sec123 is a catalytic residue. A non-standard amino acid (selenocysteine) is located at residue Sec123.

Belongs to the iodothyronine deiodinase family. In terms of assembly, predominantly monomer. Can form homodimers but homodimerization is not essential for enzyme activity.

It is found in the cell membrane. The protein localises to the endoplasmic reticulum membrane. Its subcellular location is the basolateral cell membrane. The catalysed reaction is 3,3',5-triiodo-L-thyronine + iodide + A + H(+) = L-thyroxine + AH2. It catalyses the reaction 3,3',5'-triiodo-L-thyronine + iodide + A + H(+) = L-thyroxine + AH2. It carries out the reaction 3,3'-diiodo-L-thyronine + iodide + A + H(+) = 3,3',5'-triiodo-L-thyronine + AH2. The enzyme catalyses 3,3'-diiodo-L-thyronine + iodide + A + H(+) = 3,3',5-triiodo-L-thyronine + AH2. The catalysed reaction is 3'-iodo-L-thyronine + iodide + A + H(+) = 3',5'-diiodo-L-thyronine + AH2. It catalyses the reaction 3-iodo-L-thyronine + iodide + A + H(+) = 3,5-diiodo-L-thyronine + AH2. It carries out the reaction 3-iodo-L-thyronine + iodide + A + H(+) = 3,3'-diiodo-L-thyronine + AH2. The enzyme catalyses 3,3'-diiodothyronamine + iodide + A + H(+) = 3,3',5'-triiodothyronamine + AH2. The catalysed reaction is 3'-iodothyronamine + iodide + A + H(+) = 3',5'-diiodothyronamine + AH2. It catalyses the reaction 3-iodothyronamine + iodide + A + H(+) = 3,3'-diiodothyronamine + AH2. It carries out the reaction 3,3'-diiodothyronamine + iodide + A + H(+) = 3,3',5-triiodothyronamine + AH2. The enzyme catalyses 3-iodothyronamine + iodide + A + H(+) = 3,5-diiodothyronamine + AH2. The catalysed reaction is 3,3'-diiodo-L-thyronine sulfate + iodide + A + H(+) = 3,3',5'-triiodo-L-thyronine sulfate + AH2. It catalyses the reaction 3,3',5'-triiodo-L-thyronine sulfate + iodide + A + H(+) = L-thyroxine sulfate + AH2. It carries out the reaction 3,3'-diiodo-L-thyronine sulfate + iodide + A + H(+) = 3,3',5-triiodo-L-thyronine sulfate + AH2. In terms of biological role, plays a crucial role in the metabolism of thyroid hormones (TH) and has specific roles in TH activation and inactivation by deiodination. Catalyzes the deiodiantion of L-thyroxine (T4) to 3,5,3'-triiodothyronine (T3) and 3,3',5'-triiodothyronine (rT3) to 3,3'-diiodothyronine (3,3'-T2) via outer-ring deiodination (ORD). Catalyzes the deiodiantion of T4 to rT3, T3 to 3,3'-T2, 3,5-diiodothyronine (3,5-T2) to 3-monoiodothyronine (3-T1) and 3,3'-T2 to 3-T1 via inner-ring deiodination (IRD). Catalyzes the deiodiantion of 3',5'-diiodothyronine (3',5'-T2) to 3'-monoiodothyronine (3'-T1) via ORD. Catalyzes the phenolic ring deiodinations of 3,3',5'-triiodothyronamine, 3',5'-diiodothyronamine and 3,3'-diiodothyronamine as well as tyrosyl ring deiodinations of 3,5,3'-triiodothyronamine and 3,5-diiodothyronamine. Catalyzes the deiodination of L-thyroxine sulfate and 3,3',5-triiodo-L-thyronine sulfate via IRD and of 3,3',5'-triiodo-L-thyronine sulfate via ORD. This is Type I iodothyronine deiodinase (DIO1) from Gallus gallus (Chicken).